The primary structure comprises 206 residues: Triafestin-2 (206 aa).

Positions 1–18 are cleaved as a signal peptide; the sequence is MKTILAVIFFGILAFAFA. N25, N55, and N178 each carry an N-linked (GlcNAc...) asparagine glycan.

The protein belongs to the calycin superfamily. Triabin family. In terms of assembly, interacts with host coagulation factor XII (F12) (inactive and activated) (via amino acids 1-77). Interacts with host high molecular weight kininogen (KNG1) (via amino acids 402-532). In terms of tissue distribution, salivary gland (at protein level).

The protein resides in the secreted. With respect to regulation, zn(2+) modulates binding to host coagulation factor XII (F12) and high molecular weight kininogen (KNG1). In terms of biological role, suppresses activation of the host plasma kallikrein-kinin system, leading to inhibition of the intrinsic coagulation pathway. Blocks host coagulation factor XII (F12) and prekallikrein (KLKB1) reciprocal activation without affecting their amidolytic activities. Blocks binding of host F12 and high molecular weight kininogen (KNG1) to negatively charged surfaces. Attenuates generation of bradykinin by interfering with activation of host kallikrein-kinin system. The sequence is that of Triafestin-2 from Triatoma infestans (Assassin bug).